Reading from the N-terminus, the 61-residue chain is Small ribosomal subunit protein uS14 (61 aa).

Cys24, Cys27, Cys40, and Cys43 together coordinate Zn(2+).

It belongs to the universal ribosomal protein uS14 family. Zinc-binding uS14 subfamily. As to quaternary structure, part of the 30S ribosomal subunit. Contacts proteins S3 and S10. Zn(2+) serves as cofactor.

Functionally, binds 16S rRNA, required for the assembly of 30S particles and may also be responsible for determining the conformation of the 16S rRNA at the A site. This chain is Small ribosomal subunit protein uS14, found in Campylobacter curvus (strain 525.92).